Reading from the N-terminus, the 436-residue chain is Probable protein phosphatase 2C 15 (436 aa).

In terms of domain architecture, PPM-type phosphatase spans 30 to 302; the sequence is KAAKMEKPIV…DDTTCIVVDI (273 aa). Positions 78, 79, 254, and 293 each coordinate Mn(2+).

The protein belongs to the PP2C family. It depends on Mg(2+) as a cofactor. The cofactor is Mn(2+).

The catalysed reaction is O-phospho-L-seryl-[protein] + H2O = L-seryl-[protein] + phosphate. It catalyses the reaction O-phospho-L-threonyl-[protein] + H2O = L-threonyl-[protein] + phosphate. This is Probable protein phosphatase 2C 15 from Arabidopsis thaliana (Mouse-ear cress).